We begin with the raw amino-acid sequence, 60 residues long: UPF0434 protein Rfer_3156 (60 aa).

It belongs to the UPF0434 family.

The sequence is that of UPF0434 protein Rfer_3156 from Albidiferax ferrireducens (strain ATCC BAA-621 / DSM 15236 / T118) (Rhodoferax ferrireducens).